The primary structure comprises 588 residues: Nucleoporin ndc-1 (588 aa).

Positions 1 to 12 (MMGDSHSSFTTT) are enriched in polar residues. A disordered region spans residues 1-55 (MMGDSHSSFTTTTDEHLYNQFSPGRRKNDFPAASSSSSSPNLRRSPNRTVSSPRV). The Cytoplasmic portion of the chain corresponds to 1–79 (MMGDSHSSFT…FQAEISVRKR (79 aa)). Over residues 31 to 48 (PAASSSSSSPNLRRSPNR) the composition is skewed to low complexity. Residues 80-100 (LAGAACGYLSTIFFIVTVSIL) form a helical membrane-spanning segment. Over 101–122 (KLTIWAPFSSVQDSLAWWIYPN) the chain is Perinuclear space. A helical membrane pass occupies residues 123 to 143 (AWASIIFVGIASVAMSLFSII). Residues 144–159 (KFCKVDQLPRLAATDT) are Cytoplasmic-facing. A helical transmembrane segment spans residues 160 to 180 (FALAGVALEFVTRLTFVYTAF). At 181 to 190 (CVADFSFSRE) the chain is on the perinuclear space side. The helical transmembrane segment at 191-211 (FAFVAISLAIAISSALVVFRS) threads the bilayer. The Cytoplasmic portion of the chain corresponds to 212-255 (DYQLNFSHIQVNSVKTLIDFGTSLPYANISEICGIDAAISYTAA). Residues 256 to 276 (VALILVVGPMVSGFSAWWLLL) traverse the membrane as a helical segment. A topological domain (perinuclear space) is located at residue N277. The chain crosses the membrane as a helical span at residues 278–298 (IPFHVVLFGLCFTQQFYSKIS). Residues 299–588 (MKIVNQIVMK…IRMICLTDEL (290 aa)) lie on the Cytoplasmic side of the membrane.

The protein belongs to the NDC1 family.

The protein localises to the nucleus. Its subcellular location is the nuclear pore complex. The protein resides in the nucleus membrane. In terms of biological role, component of the nuclear pore complex (NPC), which plays a key role in de novo assembly and insertion of NPC in the nuclear envelope. Plays a role in postmitotic nuclear pore complex assembly potentially by promoting localization of nuclear pore complex proteins to the nuclear rim. In Caenorhabditis elegans, this protein is Nucleoporin ndc-1.